The chain runs to 117 residues: Large ribosomal subunit protein uL24 (117 aa).

Basic residues predominate over residues Met1–Lys10. A disordered region spans residues Met1–Leu28.

The protein belongs to the universal ribosomal protein uL24 family. As to quaternary structure, part of the 50S ribosomal subunit.

In terms of biological role, one of two assembly initiator proteins, it binds directly to the 5'-end of the 23S rRNA, where it nucleates assembly of the 50S subunit. Located at the polypeptide exit tunnel on the outside of the subunit. This chain is Large ribosomal subunit protein uL24, found in Methanobrevibacter smithii (strain ATCC 35061 / DSM 861 / OCM 144 / PS).